The sequence spans 471 residues: Anthranilate 1,2-dioxygenase large subunit (471 aa).

The Rieske domain occupies 52–160 (IYACHESEIP…IASYRGFVFV (109 aa)). Residues Cys93, His95, Cys113, and His116 each coordinate [2Fe-2S] cluster. 3 residues coordinate Fe cation: His220, His225, and Asp379.

It belongs to the bacterial ring-hydroxylating dioxygenase alpha subunit family. As to quaternary structure, the anthranilate dioxygenase (AntDO) multicomponent enzyme system is composed of an oxygenase component and a NADH:acceptor reductase component (AntC). The oxygenase component is a heterohexamer of 3 large (AntA) and 3 small (AntB) subunits. It depends on Fe cation as a cofactor. The cofactor is [2Fe-2S] cluster.

The catalysed reaction is anthranilate + NADH + O2 + 3 H(+) = catechol + NH4(+) + CO2 + NAD(+). The enzyme catalyses anthranilate + NADPH + O2 + 3 H(+) = catechol + NH4(+) + CO2 + NADP(+). The protein operates within aromatic compound metabolism; anthranilate degradation via hydroxylation; catechol from anthranilate: step 1/1. Its function is as follows. Component of anthranilate dioxygenase multicomponent enzyme system which catalyzes the incorporation of both atoms of molecular oxygen into anthranilate to form catechol. The chain is Anthranilate 1,2-dioxygenase large subunit from Acinetobacter baylyi (strain ATCC 33305 / BD413 / ADP1).